The following is a 362-amino-acid chain: UDP-N-acetylglucosamine--N-acetylmuramyl-(pentapeptide) pyrophosphoryl-undecaprenol N-acetylglucosamine transferase (362 aa).

UDP-N-acetyl-alpha-D-glucosamine contacts are provided by residues 10 to 12, Asn124, Arg161, Ser195, and Gln291; that span reads TAG.

Belongs to the glycosyltransferase 28 family. MurG subfamily.

Its subcellular location is the cell membrane. The catalysed reaction is di-trans,octa-cis-undecaprenyl diphospho-N-acetyl-alpha-D-muramoyl-L-alanyl-D-glutamyl-meso-2,6-diaminopimeloyl-D-alanyl-D-alanine + UDP-N-acetyl-alpha-D-glucosamine = di-trans,octa-cis-undecaprenyl diphospho-[N-acetyl-alpha-D-glucosaminyl-(1-&gt;4)]-N-acetyl-alpha-D-muramoyl-L-alanyl-D-glutamyl-meso-2,6-diaminopimeloyl-D-alanyl-D-alanine + UDP + H(+). Its pathway is cell wall biogenesis; peptidoglycan biosynthesis. Its function is as follows. Cell wall formation. Catalyzes the transfer of a GlcNAc subunit on undecaprenyl-pyrophosphoryl-MurNAc-pentapeptide (lipid intermediate I) to form undecaprenyl-pyrophosphoryl-MurNAc-(pentapeptide)GlcNAc (lipid intermediate II). The polypeptide is UDP-N-acetylglucosamine--N-acetylmuramyl-(pentapeptide) pyrophosphoryl-undecaprenol N-acetylglucosamine transferase (Streptomyces collinus).